Here is a 449-residue protein sequence, read N- to C-terminus: Myb family transcription factor PHL6 (449 aa).

Residues 49-72 are disordered; sequence PFIRSQSPDSPGQLWPKNSSQSTF. Positions 238–298 constitute an HTH myb-type domain; the sequence is ANQKSRMRWT…HLQKYRLAKY (61 aa). Positions 269–294 form a DNA-binding region, H-T-H motif; that stretch reads PKAVKKLMNVEGLTIYHVKSHLQKYR. A disordered region spans residues 301–327; it reads EKKEEKRTDNSEEKKLALSKSEADEKK. A coiled coil region spans residues 334–354; that stretch reads TEALRMQMEVQKQLHEQLEVQ. The LHEQLE motif lies at 347-352; sequence LHEQLE. Positions 376–449 are disordered; the sequence is RKTGRWISSS…NIAESEDPKR (74 aa). Residues 381-410 show a composition bias toward polar residues; the sequence is WISSSSQTVLSPSDDSIPDSQNMSKTKASS.

Belongs to the MYB-CC family.

It localises to the nucleus. The chain is Myb family transcription factor PHL6 from Arabidopsis thaliana (Mouse-ear cress).